Consider the following 142-residue polypeptide: Large ribosomal subunit protein uL11 (142 aa).

It belongs to the universal ribosomal protein uL11 family. In terms of assembly, part of the ribosomal stalk of the 50S ribosomal subunit. Interacts with L10 and the large rRNA to form the base of the stalk. L10 forms an elongated spine to which L12 dimers bind in a sequential fashion forming a multimeric L10(L12)X complex. In terms of processing, one or more lysine residues are methylated.

Functionally, forms part of the ribosomal stalk which helps the ribosome interact with GTP-bound translation factors. The protein is Large ribosomal subunit protein uL11 of Cronobacter sakazakii (strain ATCC BAA-894) (Enterobacter sakazakii).